The primary structure comprises 77 residues: Surfactant-associated protein 2 (77 aa).

A signal peptide spans 1 to 19; it reads MESLMRLFLLLALLSSSHA. N-linked (GlcNAc...) asparagine glycosylation is present at N61.

N-glycosylated. In terms of tissue distribution, expressed in lung, and specifically in alveolar type II epithelial cells.

The protein localises to the secreted. The protein resides in the cytoplasmic vesicle. It is found in the secretory vesicle. Its subcellular location is the golgi apparatus. In terms of biological role, putative surfactant protein. This is Surfactant-associated protein 2 from Mus musculus (Mouse).